Reading from the N-terminus, the 1240-residue chain is ABC transporter B family member 17 (1240 aa).

The ABC transmembrane type-1 1 domain occupies 35-324 (MALGLIGAVG…SLSNLKYFSE (290 aa)). Residues 36–56 (ALGLIGAVGDGFITPVVVFIF) form a helical membrane-spanning segment. Asn-70 carries N-linked (GlcNAc...) asparagine glycosylation. 5 helical membrane-spanning segments follow: residues 81–101 (VVAL…EGYC), 158–180 (LPNF…ILMW), 184–206 (IVGF…ALVS), 264–284 (GITI…TWYG), and 296–316 (GTVF…GQSL). The region spanning 359–595 (VEFNHVKFTY…IDGQYTSLVS (237 aa)) is the ABC transporter 1 domain. 394–401 (GGSGSGKS) is an ATP binding site. N-linked (GlcNAc...) asparagine glycans are attached at residues Asn-542, Asn-609, and Asn-642. In terms of domain architecture, ABC transmembrane type-1 2 spans 672–960 (ALYGCLSAAL…AGTMTTDLAR (289 aa)). A run of 2 helical transmembrane segments spans residues 681 to 701 (LVGV…SVFF) and 714 to 734 (IYVL…ISQH). A glycan (N-linked (GlcNAc...) asparagine) is linked at Asn-769. The next 4 helical transmembrane spans lie at 793–815 (MSLL…VIAW), 817–839 (LAIV…RVLL), 896–919 (WLAG…NFWY), and 923–943 (LIAD…IFVT). In terms of domain architecture, ABC transporter 2 spans 995 to 1233 (ITFLNVDFAY…GPTGTYFSLA (239 aa)). A glycan (N-linked (GlcNAc...) asparagine) is linked at Asn-1015. 1030–1037 (GTSGSGKS) serves as a coordination point for ATP.

It belongs to the ABC transporter superfamily. ABCB family. Multidrug resistance exporter (TC 3.A.1.201) subfamily.

Its subcellular location is the membrane. This chain is ABC transporter B family member 17 (ABCB17), found in Arabidopsis thaliana (Mouse-ear cress).